A 236-amino-acid polypeptide reads, in one-letter code: 2-C-methyl-D-erythritol 4-phosphate cytidylyltransferase (236 aa).

It belongs to the IspD/TarI cytidylyltransferase family. IspD subfamily. Homodimer.

It catalyses the reaction 2-C-methyl-D-erythritol 4-phosphate + CTP + H(+) = 4-CDP-2-C-methyl-D-erythritol + diphosphate. It participates in isoprenoid biosynthesis; isopentenyl diphosphate biosynthesis via DXP pathway; isopentenyl diphosphate from 1-deoxy-D-xylulose 5-phosphate: step 2/6. Catalyzes the formation of 4-diphosphocytidyl-2-C-methyl-D-erythritol from CTP and 2-C-methyl-D-erythritol 4-phosphate (MEP). This Enterobacter sp. (strain 638) protein is 2-C-methyl-D-erythritol 4-phosphate cytidylyltransferase.